A 445-amino-acid polypeptide reads, in one-letter code: MVESIAAGQVSDNKHIEMWKVKKLISKLEHCKGNGTSMVSLIIPPKDDINKYGKLLTGEMSAAQNIKSRITKQSVVTAITSTKEKLKLYKQTPTNGLCLYCGVIYMEDGKTEKKINFDFEPFRPINQFLYFCGGKFQTEPLLSLLADDDKFGFIIVDGNGALYATLQGNSREILQKITVELPKKHRKGGQSSVRFARLREEKRHNYLRKVAELANQNFITNDRPNVTGIVLAGNAAFKNELAETDMLDKRLLPVICAVVDVSYGGENGLNEAITLAAEALTNVKFVAEKKLVSKFFEEIALDTGMIVFGVDDTMKALELGAVETVLLFEELDINRYVLKNPVKGDTKTIYLNSTQQKDSKYFKDRETGMDLDVVSEDSLAEWLCHNYQNYGAQVEFITDKSQEGFQFVKGFGGIGGFLRYKVDIEDHHGDLGAGGDDFDPDTDFI.

This sequence belongs to the eukaryotic release factor 1 family. In terms of assembly, heterodimer of two subunits, one of which binds GTP.

The protein resides in the cytoplasm. Its function is as follows. Directs the termination of nascent peptide synthesis (translation) in response to the termination codon UGA. In O.trifallax UAA and UAG codes for glutamine. The polypeptide is Eukaryotic peptide chain release factor subunit 1 (ERF1) (Oxytricha trifallax (Sterkiella histriomuscorum)).